Here is a 246-residue protein sequence, read N- to C-terminus: MAGHSKWANIKHRKAAQDAQRGKIFTKLIRELVTAAKIGGGDVSANPRLRSAVDKALSNNMTRDTINRAIERGVGGGDDTNMETKIYEGYGPGGTAVMVECLSDNANRTISQVRPSFTKCGGNLGTEGSVGYLFSKKGLILIASGDEDALTEAAIEAGADDIQPQEDGSFEIYTAWEDLGSVRDGIEAAGFKIQEAEVTMIPSTTVELDAETAPKLLDLINRLEDCDDVQNVYHNGEISDEVAALL.

Belongs to the TACO1 family.

It is found in the cytoplasm. The sequence is that of Probable transcriptional regulatory protein APP7_1210 from Actinobacillus pleuropneumoniae serotype 7 (strain AP76).